The sequence spans 101 residues: Small ribosomal subunit protein uS14 (101 aa).

Belongs to the universal ribosomal protein uS14 family. Part of the 30S ribosomal subunit. Contacts proteins S3 and S10.

Functionally, binds 16S rRNA, required for the assembly of 30S particles and may also be responsible for determining the conformation of the 16S rRNA at the A site. The chain is Small ribosomal subunit protein uS14 from Aliivibrio fischeri (strain MJ11) (Vibrio fischeri).